A 44-amino-acid chain; its full sequence is uncharacterized protein (44 aa).

This is an uncharacterized protein from Methanocaldococcus jannaschii (strain ATCC 43067 / DSM 2661 / JAL-1 / JCM 10045 / NBRC 100440) (Methanococcus jannaschii).